Consider the following 224-residue polypeptide: Phosphoribosylformylglycinamidine synthase subunit PurQ (224 aa).

The Glutamine amidotransferase type-1 domain occupies 2–224 (KFAVIVFPGS…IVDNFVKGGV (223 aa)). Cysteine 86 functions as the Nucleophile in the catalytic mechanism. Active-site residues include histidine 194 and glutamate 196.

Part of the FGAM synthase complex composed of 1 PurL, 1 PurQ and 2 PurS subunits.

The protein resides in the cytoplasm. It catalyses the reaction N(2)-formyl-N(1)-(5-phospho-beta-D-ribosyl)glycinamide + L-glutamine + ATP + H2O = 2-formamido-N(1)-(5-O-phospho-beta-D-ribosyl)acetamidine + L-glutamate + ADP + phosphate + H(+). It carries out the reaction L-glutamine + H2O = L-glutamate + NH4(+). It participates in purine metabolism; IMP biosynthesis via de novo pathway; 5-amino-1-(5-phospho-D-ribosyl)imidazole from N(2)-formyl-N(1)-(5-phospho-D-ribosyl)glycinamide: step 1/2. Its function is as follows. Part of the phosphoribosylformylglycinamidine synthase complex involved in the purines biosynthetic pathway. Catalyzes the ATP-dependent conversion of formylglycinamide ribonucleotide (FGAR) and glutamine to yield formylglycinamidine ribonucleotide (FGAM) and glutamate. The FGAM synthase complex is composed of three subunits. PurQ produces an ammonia molecule by converting glutamine to glutamate. PurL transfers the ammonia molecule to FGAR to form FGAM in an ATP-dependent manner. PurS interacts with PurQ and PurL and is thought to assist in the transfer of the ammonia molecule from PurQ to PurL. This Caldanaerobacter subterraneus subsp. tengcongensis (strain DSM 15242 / JCM 11007 / NBRC 100824 / MB4) (Thermoanaerobacter tengcongensis) protein is Phosphoribosylformylglycinamidine synthase subunit PurQ.